Consider the following 86-residue polypeptide: Small ribosomal subunit protein uS17 (86 aa).

This sequence belongs to the universal ribosomal protein uS17 family. Part of the 30S ribosomal subunit.

Its function is as follows. One of the primary rRNA binding proteins, it binds specifically to the 5'-end of 16S ribosomal RNA. The protein is Small ribosomal subunit protein uS17 of Roseiflexus sp. (strain RS-1).